The chain runs to 88 residues: Small ribosomal subunit protein uS17 (88 aa).

Belongs to the universal ribosomal protein uS17 family. Part of the 30S ribosomal subunit.

In terms of biological role, one of the primary rRNA binding proteins, it binds specifically to the 5'-end of 16S ribosomal RNA. This Brevibacillus brevis (strain 47 / JCM 6285 / NBRC 100599) protein is Small ribosomal subunit protein uS17.